The chain runs to 430 residues: Gustatory receptor-like 43a (430 aa).

The Cytoplasmic portion of the chain corresponds to 1–31 (MSTGSHSPEAMWSATNFRRHQRKPNQVLHRW). A helical transmembrane segment spans residues 32–52 (FFKGSAWIIYAIACGLHFFKL). Over 53–79 (HYNERTNQVEESQYHRIWSKIVVVLKV) the chain is Extracellular. A helical transmembrane segment spans residues 80–100 (ILLASPYLQYFVLGLGIYIHI). Over 101-110 (TLVQDSKAQN) the chain is Cytoplasmic. Residues 111-131 (FLMSLIVLGIVIGVLRRLLIF) form a helical membrane-spanning segment. Over 132 to 168 (LHLKRDRRFLKHTVNEILHITSALEQKFGMEYKCDST) the chain is Extracellular. A helical membrane pass occupies residues 169–189 (LLVVYLAKLWILTVMLDSLWY). Over 190–277 (KPYFLSSIFL…RDNVSWLSTS (88 aa)) the chain is Cytoplasmic. A helical transmembrane segment spans residues 278–298 (VYLMIFTCIFNAELLIECSLF). Residues 299-306 (AGDELENK) are Extracellular-facing. The helical transmembrane segment at 307-327 (IYIITDGCLGPVCVPILYVLI) threads the bilayer. At 328–396 (LGMCTDRFRD…IILDITCDRE (69 aa)) the chain is on the cytoplasmic side. The helical transmembrane segment at 397 to 417 (FVMDYIVTVILTALSLVQYTI) threads the bilayer. The Extracellular portion of the chain corresponds to 418 to 430 (STGGNISECVTHK). Asn-422 carries an N-linked (GlcNAc...) asparagine glycan.

The protein resides in the cell membrane. The sequence is that of Gustatory receptor-like 43a from Drosophila melanogaster (Fruit fly).